The following is a 378-amino-acid chain: Putative F-box only protein 15 (378 aa).

Residues 5–52 (KRVYRSLPFELVEEILKKTPAESLNRFKSTCKQWYGIITSKRFMYNHL) enclose the F-box domain.

The sequence is that of Putative F-box only protein 15 (FBX15) from Arabidopsis thaliana (Mouse-ear cress).